Consider the following 373-residue polypeptide: 3-isopropylmalate dehydrogenase (373 aa).

82–93 lines the NAD(+) pocket; sequence GPKWGTGAVRPE. Substrate-binding residues include R100, R110, R139, and D231. Mg(2+)-binding residues include D231 and D260. Residue 295 to 306 coordinates NAD(+); that stretch reads GSAPDLPENKVN.

The protein belongs to the isocitrate and isopropylmalate dehydrogenases family. Homodimer. It depends on Mg(2+) as a cofactor. Mn(2+) serves as cofactor.

Its subcellular location is the cytoplasm. The catalysed reaction is (2R,3S)-3-isopropylmalate + NAD(+) = 4-methyl-2-oxopentanoate + CO2 + NADH. Its pathway is amino-acid biosynthesis; L-leucine biosynthesis; L-leucine from 3-methyl-2-oxobutanoate: step 3/4. Catalyzes the oxidation of 3-carboxy-2-hydroxy-4-methylpentanoate (3-isopropylmalate) to 3-carboxy-4-methyl-2-oxopentanoate. The product decarboxylates to 4-methyl-2 oxopentanoate. The protein is 3-isopropylmalate dehydrogenase (LEU2) of Scheffersomyces stipitis (strain ATCC 58785 / CBS 6054 / NBRC 10063 / NRRL Y-11545) (Yeast).